Here is a 133-residue protein sequence, read N- to C-terminus: Small ribosomal subunit protein uS11 (133 aa).

The protein belongs to the universal ribosomal protein uS11 family. Part of the 30S ribosomal subunit. Interacts with proteins S7 and S18. Binds to IF-3.

Located on the platform of the 30S subunit, it bridges several disparate RNA helices of the 16S rRNA. Forms part of the Shine-Dalgarno cleft in the 70S ribosome. This Chlamydia pneumoniae (Chlamydophila pneumoniae) protein is Small ribosomal subunit protein uS11.